A 189-amino-acid chain; its full sequence is Probable nicotinate-nucleotide adenylyltransferase (189 aa).

This sequence belongs to the NadD family.

The catalysed reaction is nicotinate beta-D-ribonucleotide + ATP + H(+) = deamido-NAD(+) + diphosphate. The protein operates within cofactor biosynthesis; NAD(+) biosynthesis; deamido-NAD(+) from nicotinate D-ribonucleotide: step 1/1. Its function is as follows. Catalyzes the reversible adenylation of nicotinate mononucleotide (NaMN) to nicotinic acid adenine dinucleotide (NaAD). This is Probable nicotinate-nucleotide adenylyltransferase from Staphylococcus aureus (strain bovine RF122 / ET3-1).